Consider the following 100-residue polypeptide: Large ribosomal subunit protein uL23 (100 aa).

It belongs to the universal ribosomal protein uL23 family. As to quaternary structure, part of the 50S ribosomal subunit. Contacts protein L29, and trigger factor when it is bound to the ribosome.

One of the early assembly proteins it binds 23S rRNA. One of the proteins that surrounds the polypeptide exit tunnel on the outside of the ribosome. Forms the main docking site for trigger factor binding to the ribosome. The sequence is that of Large ribosomal subunit protein uL23 from Rippkaea orientalis (strain PCC 8801 / RF-1) (Cyanothece sp. (strain PCC 8801)).